The chain runs to 365 residues: UDP-N-acetylglucosamine--N-acetylmuramyl-(pentapeptide) pyrophosphoryl-undecaprenol N-acetylglucosamine transferase (365 aa).

UDP-N-acetyl-alpha-D-glucosamine contacts are provided by residues 19 to 21 (TGG), asparagine 131, arginine 170, serine 201, isoleucine 255, 274 to 279 (ALTVTE), and glutamine 300.

It belongs to the glycosyltransferase 28 family. MurG subfamily.

It localises to the cell inner membrane. The catalysed reaction is di-trans,octa-cis-undecaprenyl diphospho-N-acetyl-alpha-D-muramoyl-L-alanyl-D-glutamyl-meso-2,6-diaminopimeloyl-D-alanyl-D-alanine + UDP-N-acetyl-alpha-D-glucosamine = di-trans,octa-cis-undecaprenyl diphospho-[N-acetyl-alpha-D-glucosaminyl-(1-&gt;4)]-N-acetyl-alpha-D-muramoyl-L-alanyl-D-glutamyl-meso-2,6-diaminopimeloyl-D-alanyl-D-alanine + UDP + H(+). Its pathway is cell wall biogenesis; peptidoglycan biosynthesis. Its function is as follows. Cell wall formation. Catalyzes the transfer of a GlcNAc subunit on undecaprenyl-pyrophosphoryl-MurNAc-pentapeptide (lipid intermediate I) to form undecaprenyl-pyrophosphoryl-MurNAc-(pentapeptide)GlcNAc (lipid intermediate II). This chain is UDP-N-acetylglucosamine--N-acetylmuramyl-(pentapeptide) pyrophosphoryl-undecaprenol N-acetylglucosamine transferase, found in Acinetobacter baylyi (strain ATCC 33305 / BD413 / ADP1).